Reading from the N-terminus, the 196-residue chain is Molybdenum cofactor guanylyltransferase (196 aa).

GTP is bound by residues 10-12 (LAG), lysine 23, asparagine 51, aspartate 69, and aspartate 99. Aspartate 99 contributes to the Mg(2+) binding site.

The protein belongs to the MobA family. Monomer. It depends on Mg(2+) as a cofactor.

The protein resides in the cytoplasm. It carries out the reaction Mo-molybdopterin + GTP + H(+) = Mo-molybdopterin guanine dinucleotide + diphosphate. Transfers a GMP moiety from GTP to Mo-molybdopterin (Mo-MPT) cofactor (Moco or molybdenum cofactor) to form Mo-molybdopterin guanine dinucleotide (Mo-MGD) cofactor. The protein is Molybdenum cofactor guanylyltransferase of Shewanella baltica (strain OS185).